We begin with the raw amino-acid sequence, 504 residues long: Mitochondrial-processing peptidase subunit alpha (504 aa).

It belongs to the peptidase M16 family. In terms of assembly, heterodimer of alpha and beta subunits, forming the mitochondrial processing protease (MPP) in which subunit alpha is involved in substrate recognition and binding and subunit beta is the catalytic subunit.

The protein resides in the mitochondrion inner membrane. The catalysed reaction is a quinol + 2 Fe(III)-[cytochrome c](out) = a quinone + 2 Fe(II)-[cytochrome c](out) + 2 H(+)(out). Its function is as follows. Substrate recognition and binding subunit of the essential mitochondrial processing protease (MPP), which cleaves the mitochondrial sequence off newly imported precursors proteins. In terms of biological role, this is a component of the ubiquinol-cytochrome c reductase complex (complex III or cytochrome b-c1 complex), which is part of the mitochondrial respiratory chain. Mediates formation of the complex between cytochromes c and c1. This is Mitochondrial-processing peptidase subunit alpha (MPP) from Solanum tuberosum (Potato).